A 394-amino-acid chain; its full sequence is ATP phosphoribosyltransferase regulatory subunit (394 aa).

It belongs to the class-II aminoacyl-tRNA synthetase family. HisZ subfamily. As to quaternary structure, heteromultimer composed of HisG and HisZ subunits.

It is found in the cytoplasm. The protein operates within amino-acid biosynthesis; L-histidine biosynthesis; L-histidine from 5-phospho-alpha-D-ribose 1-diphosphate: step 1/9. In terms of biological role, required for the first step of histidine biosynthesis. May allow the feedback regulation of ATP phosphoribosyltransferase activity by histidine. This chain is ATP phosphoribosyltransferase regulatory subunit, found in Saccharophagus degradans (strain 2-40 / ATCC 43961 / DSM 17024).